Consider the following 359-residue polypeptide: Tyrosine-protein phosphatase non-receptor type 7 (359 aa).

The disordered stretch occupies residues 1 to 34; that stretch reads MVQACEGRSRAQLPTLSLGADMTQPPPAKAPAKK. An interaction with MAP kinases region spans residues 38 to 51; sequence LQERRGSSVALMLD. S44 bears the Phosphoserine mark. T66 is subject to Phosphothreonine. Phosphoserine occurs at positions 93 and 143. A Tyrosine-protein phosphatase domain is found at 97–349; it reads LEEEFLKIPS…QFLHHTLALY (253 aa). Residues D257, 290-296, and Q334 contribute to the substrate site; that span reads CSAGIGR. C290 serves as the catalytic Phosphocysteine intermediate. A Cysteine sulfenic acid (-SOH) modification is found at C290.

Belongs to the protein-tyrosine phosphatase family. Non-receptor class subfamily. In terms of processing, oxidized at active site cysteine. Treatment with pervanadate (vanadate and H(2)O(2)) or with antigen enhanced oxidation of active site cysteine.

The protein resides in the cytoplasm. It is found in the cytoskeleton. The enzyme catalyses O-phospho-L-tyrosyl-[protein] + H2O = L-tyrosyl-[protein] + phosphate. Inhibited in cells after FCER1A triggering. Functionally, may play a role in the regulation of T and B-lymphocyte development and signal transduction. This Rattus norvegicus (Rat) protein is Tyrosine-protein phosphatase non-receptor type 7 (Ptpn7).